A 403-amino-acid chain; its full sequence is Tripartite motif-containing protein 59 (403 aa).

An RING-type zinc finger spans residues Cys10–Arg60. The B box-type zinc-finger motif lies at Pro92–Leu134. Residues Cys97, His100, Cys120, and His126 each coordinate Zn(2+). A coiled-coil region spans residues Leu163–Ser246. The chain crosses the membrane as a helical span at residues Ile329–Asn349.

It belongs to the TRIM/RBCC family. As to quaternary structure, interacts with ECSIT. As to expression, moderately expressed in the spleen, brain and heart and very highly expressed in the testis.

Its subcellular location is the endoplasmic reticulum membrane. The enzyme catalyses S-ubiquitinyl-[E2 ubiquitin-conjugating enzyme]-L-cysteine + [acceptor protein]-L-lysine = [E2 ubiquitin-conjugating enzyme]-L-cysteine + N(6)-ubiquitinyl-[acceptor protein]-L-lysine.. Its pathway is protein modification; protein ubiquitination. Its function is as follows. E3 ubiquitin ligase involved in different processes such as development and immune response. Serves as a negative regulator for innate immune signaling pathways by suppressing RLR-induced activation of IRF3/7 and NF-kappa-B via interaction with adapter ECSIT. Regulates autophagy through modulating both the transcription and the ubiquitination of BECN1. On the one hand, regulates the transcription of BECN1 through negatively modulating the NF-kappa-B pathway. On the other hand, regulates TRAF6-mediated 'Lys-63'-linked ubiquitination of BECN1, thus affecting the formation of the BECN1-PIK3C3 complex. In addition, mediates 'Lys-48'-linked ubiquitination of TRAF6 and thereby promotes TRAF6 proteasomal degradation. Also acts as a critical regulator for early embryo development from blastocyst stage to gastrula through modulating F-actin assembly and WASH1 'Lys-63'-linked ubiquitination. The polypeptide is Tripartite motif-containing protein 59 (Trim59) (Mus musculus (Mouse)).